Here is a 367-residue protein sequence, read N- to C-terminus: Pectate lyase 1 (367 aa).

The signal sequence occupies residues 1–21 (MASPCLIAFLVFLCAIVSCCS). Disulfide bonds link cysteine 28–cysteine 45 and cysteine 128–cysteine 147. Asparagine 148 carries an N-linked (GlcNAc...) asparagine glycan. Position 170 (aspartate 170) interacts with Ca(2+). Asparagine 178 carries N-linked (GlcNAc...) asparagine glycosylation. The Ca(2+) site is built by aspartate 194 and aspartate 198. Arginine 250 is an active-site residue. Cysteine 306 and cysteine 312 are joined by a disulfide.

The protein belongs to the polysaccharide lyase 1 family. Amb a subfamily. It depends on Ca(2+) as a cofactor.

The enzyme catalyses Eliminative cleavage of (1-&gt;4)-alpha-D-galacturonan to give oligosaccharides with 4-deoxy-alpha-D-galact-4-enuronosyl groups at their non-reducing ends.. It participates in glycan metabolism; pectin degradation; 2-dehydro-3-deoxy-D-gluconate from pectin: step 2/5. In terms of biological role, has pectate lyase activity. This chain is Pectate lyase 1, found in Juniperus virginiana (Eastern redcedar).